The chain runs to 492 residues: Alpha/beta hydrolase ucsC (492 aa).

Residue Ser-258 is the Nucleophile of the active site.

Belongs to the AB hydrolase superfamily. FUS2 hydrolase family. As to quaternary structure, homodimer.

The protein operates within mycotoxin biosynthesis. Its function is as follows. Alpha/beta hydrolase; part of the gene cluster that mediates the biosynthesis of UCS1025A, a member of the pyrrolizidinone family that acts as a strong telomerase inhibitor and displays potent antibacterial and antitumor properties. These compounds share a hemiaminal-containing pyrrolizidinone core fused with a gamma-lactone, giving a furopyrrolizidine that is connected to a decalin fragment. The polyketide synthase module (PKS) of the PKS-NRPS ucsA is responsible for the synthesis of the polyketide backbone via the condensation of an acetyl-CoA starter unit with 6 malonyl-CoA units. The downstream nonribosomal peptide synthetase (NRPS) module then amidates the carboxyl end of the polyketide with a 2S,3S-methylproline derived from L-isoleucine by the 2-oxoglutarate-dependent dioxygenase ucsF which converts L-isoleucine to (4S,5S)-4-methylpyrroline-5-carboxylate that is further converted to 2S,3S-methylproline by the pyrroline-5-carboxylate reductase ucsG. Reductive release of the completed aminoacyl polyketide from the assembly line can form the 3-pyrrolin-2-one structure via an intramolecular Knoevenagel reaction. Because ucsA lacks a designated enoylreductase (ER) domain, the required activity is provided the enoyl reductase ucsL. This keto acyclic precursor is the substrate of the Diels-Alderase ucsH, that catalyzes the Diels-Alder cycloaddition. Oxidation of the 3S-methyl group to a carboxylate by the cytochrome P450 monooxygenase ucsK allows an oxa-Michael cyclization that might involve the reductase/dehydrogenase ucsI and which furnishes the furopyrrolizidine. The oxidase ucsJ likely plays a critical role in stereoselective reduction of the C5-C6 double bond to afford the required R-configured carboxylate group. Further enolization and oxidation at C5 by an unidentified enzyme affords the last intermediate that can undergo oxa-Michael cyclization to yield UCS1025A. This is Alpha/beta hydrolase ucsC from Acremonium sp.